We begin with the raw amino-acid sequence, 352 residues long: Threonine synthase (352 aa).

Lys-59 is modified (N6-(pyridoxal phosphate)lysine). Pyridoxal 5'-phosphate contacts are provided by residues Asn-85, 185 to 189 (GNAGN), and Thr-314.

It belongs to the threonine synthase family. Pyridoxal 5'-phosphate is required as a cofactor.

The enzyme catalyses O-phospho-L-homoserine + H2O = L-threonine + phosphate. Its pathway is amino-acid biosynthesis; L-threonine biosynthesis; L-threonine from L-aspartate: step 5/5. Functionally, catalyzes the gamma-elimination of phosphate from L-phosphohomoserine and the beta-addition of water to produce L-threonine. The protein is Threonine synthase (thrC) of Bacillus sp. (strain ULM1).